The primary structure comprises 619 residues: 2-isopropylmalate synthase (619 aa).

Residues 61-336 enclose the Pyruvate carboxyltransferase domain; the sequence is PRWLSTDLRD…SPNLDFSDLT (276 aa). Residues D70, H275, H277, and N311 each coordinate a divalent metal cation.

Belongs to the alpha-IPM synthase/homocitrate synthase family. LeuA type 2 subfamily. Homodimer. A divalent metal cation is required as a cofactor.

It localises to the cytoplasm. The protein localises to the mitochondrion. It carries out the reaction 3-methyl-2-oxobutanoate + acetyl-CoA + H2O = (2S)-2-isopropylmalate + CoA + H(+). Its pathway is amino-acid biosynthesis; L-leucine biosynthesis; L-leucine from 3-methyl-2-oxobutanoate: step 1/4. In terms of biological role, catalyzes the condensation of the acetyl group of acetyl-CoA with 3-methyl-2-oxobutanoate (2-oxoisovalerate) to form 3-carboxy-3-hydroxy-4-methylpentanoate (2-isopropylmalate). The polypeptide is 2-isopropylmalate synthase (LEU4) (Saccharomyces cerevisiae (strain ATCC 204508 / S288c) (Baker's yeast)).